Here is a 58-residue protein sequence, read N- to C-terminus: Protein YecU (58 aa).

This Escherichia coli (strain K12) protein is Protein YecU.